A 301-amino-acid chain; its full sequence is Putative MgpC-like protein MPN_093 (301 aa).

The protein belongs to the MgpC family.

The sequence is that of Putative MgpC-like protein MPN_093 from Mycoplasma pneumoniae (strain ATCC 29342 / M129 / Subtype 1) (Mycoplasmoides pneumoniae).